The primary structure comprises 427 residues: Peptidase B (427 aa).

Residues lysine 195 and aspartate 200 each coordinate Mn(2+). Residue lysine 207 is part of the active site. Mn(2+)-binding residues include aspartate 218, aspartate 277, and glutamate 279. Arginine 281 is a catalytic residue.

It belongs to the peptidase M17 family. Homohexamer. Mn(2+) serves as cofactor.

Its subcellular location is the cytoplasm. It carries out the reaction Release of an N-terminal amino acid, Xaa, from a peptide or arylamide. Xaa is preferably Glu or Asp but may be other amino acids, including Leu, Met, His, Cys and Gln.. Probably plays an important role in intracellular peptide degradation. This chain is Peptidase B, found in Escherichia coli O139:H28 (strain E24377A / ETEC).